We begin with the raw amino-acid sequence, 819 residues long: Probable cadmium/zinc-transporting ATPase HMA1, chloroplastic (819 aa).

A chloroplast-targeting transit peptide spans 1-17 (MEPATLTRSSSLTRFPY). The Stromal segment spans residues 18 to 122 (RRGLSTLRLA…IGWVRLANYL (105 aa)). A compositionally biased stretch (basic and acidic residues) spans 66-79 (DHHHDHHHDDEQDH). The disordered stretch occupies residues 66-87 (DHHHDHHHDDEQDHHNHHHHHH). A helical membrane pass occupies residues 123-144 (REHLHLCCSAAAMFLAAAVCPY). Over 145 to 153 (LAPEPYIKS) the chain is Lumenal. A helical transmembrane segment spans residues 154–173 (LQNAFMIVGFPLVGVSASLD). At 174–180 (ALMDIAG) the chain is on the stromal side. The helical transmembrane segment at 181–201 (GKVNIHVLMALAAFASVFMGN) threads the bilayer. A202 is a topological domain (lumenal). A helical membrane pass occupies residues 203-223 (LEGGLLLAMFNLAHIAEEFFT). The Stromal portion of the chain corresponds to 224–361 (SRSMVDVKEL…KPKLQRWLDE (138 aa)). A helical transmembrane segment spans residues 362–384 (FGENYSKVVVVLSLAIAFLGPFL). The Lumenal portion of the chain corresponds to 385 to 398 (FKWPFLSTAACRGS). A helical membrane pass occupies residues 399-416 (VYRALGLMVAASPCALAV). Residues 417 to 737 (APLAYATAIS…AKSRQTTSLV (321 aa)) are Stromal-facing. The 4-aspartylphosphate intermediate role is filled by D453. Mg(2+) contacts are provided by E682 and D686. A helical transmembrane segment spans residues 738–757 (KQNVALALTSIFLAALPSVL). Topologically, residues 758 to 762 (GFVPL) are lumenal. Residues 763 to 781 (WLTVLLHEGGTLLVCLNSV) form a helical membrane-spanning segment. Residues 782 to 819 (RGLNDPSWSWKQDIVHLINKLRSQEPTSSSSNSLSSAH) lie on the Stromal side of the membrane.

The protein belongs to the cation transport ATPase (P-type) (TC 3.A.3) family. Type IB subfamily.

It is found in the plastid. The protein resides in the chloroplast inner membrane. It carries out the reaction Zn(2+)(in) + ATP + H2O = Zn(2+)(out) + ADP + phosphate + H(+). The enzyme catalyses Cd(2+)(in) + ATP + H2O = Cd(2+)(out) + ADP + phosphate + H(+). Functionally, involved in cadmium/zinc transport. This is Probable cadmium/zinc-transporting ATPase HMA1, chloroplastic (HMA1) from Arabidopsis thaliana (Mouse-ear cress).